A 209-amino-acid polypeptide reads, in one-letter code: Large ribosomal subunit protein uL3 (209 aa).

An N5-methylglutamine modification is found at Gln-150.

Belongs to the universal ribosomal protein uL3 family. In terms of assembly, part of the 50S ribosomal subunit. Forms a cluster with proteins L14 and L19. Post-translationally, methylated by PrmB.

Its function is as follows. One of the primary rRNA binding proteins, it binds directly near the 3'-end of the 23S rRNA, where it nucleates assembly of the 50S subunit. The protein is Large ribosomal subunit protein uL3 of Proteus mirabilis (strain HI4320).